Here is a 208-residue protein sequence, read N- to C-terminus: Protein GrpE (208 aa).

Over residues 1 to 12 (MTNKDESVEKNT) the composition is skewed to basic and acidic residues. The segment at 1 to 51 (MTNKDESVEKNTESTVEETNVKQNIDDSVEQAEESKGHLQDEAIEETSDEN) is disordered. Polar residues predominate over residues 13–23 (ESTVEETNVKQ). Residues 42 to 51 (EAIEETSDEN) show a composition bias toward acidic residues.

The protein belongs to the GrpE family. Homodimer.

The protein resides in the cytoplasm. Functionally, participates actively in the response to hyperosmotic and heat shock by preventing the aggregation of stress-denatured proteins, in association with DnaK and GrpE. It is the nucleotide exchange factor for DnaK and may function as a thermosensor. Unfolded proteins bind initially to DnaJ; upon interaction with the DnaJ-bound protein, DnaK hydrolyzes its bound ATP, resulting in the formation of a stable complex. GrpE releases ADP from DnaK; ATP binding to DnaK triggers the release of the substrate protein, thus completing the reaction cycle. Several rounds of ATP-dependent interactions between DnaJ, DnaK and GrpE are required for fully efficient folding. This Staphylococcus aureus (strain USA300) protein is Protein GrpE.